We begin with the raw amino-acid sequence, 515 residues long: Ribosome assembly protein 4 (515 aa).

The tract at residues 20-128 is interaction with MDN1; the sequence is REVAIIPKDL…LLYTPRAVFK (109 aa). The tract at residues 29–125 is ubiquitin-like (UBL) domain; sequence LPNVSIKFQA…QITLLYTPRA (97 aa). WD repeat units follow at residues 141 to 181, 184 to 223, 227 to 273, 276 to 314, 352 to 396, 400 to 439, 442 to 481, and 484 to 515; these read GHGS…PMHT, GHYNWVLCVSWSPDGEVIATGSMDNTIRLWDPKSGQCLGD, GHSK…CQYT, GHTNSVSCVKWGGQGLLYSGSHDRTVRVWDINSQGRCIN, AQKK…KPIA, GHQKLVNHVAFSPDGRYIVSASFDNSIKLWDGRDGKFIST, GHVASVYQVAWSSDCRLLVSCSKDTTLKVWDVRTRKLSVD, and GHKDEVYTVDWSVDGKRVCSGGKDKMVRLWTH.

Belongs to the NLE1/RSA4 family. As to quaternary structure, associates with the pre-60S ribosomal particle. Interacts (via WD repeats) with uL18 (RPL5). Interacts (via UBL domain) with MDN1 (via VWFA/MIDAS domain). Interacts (via WD repeats) with NSA2.

It localises to the nucleus. The protein resides in the nucleolus. Its function is as follows. Involved in ribosome biogenesis. Required for processing and efficient intra-nuclear transport of pre-60S ribosomal subunits. Interacts with the AAA-ATPase Midasin (MDN1/REA1), which is essential for the ATP-dependent dissociation of a group of nonribosomal factors from the pre-60S particle. This is Ribosome assembly protein 4 from Saccharomyces cerevisiae (strain ATCC 204508 / S288c) (Baker's yeast).